We begin with the raw amino-acid sequence, 218 residues long: Adenylate kinase (218 aa).

10-15 serves as a coordination point for ATP; that stretch reads GAGKGT. Residues 30–59 form an NMP region; the sequence is STGNMLRAAVKAGTPLGLEAKKVMDAGGLV. AMP is bound by residues Thr-31, Arg-36, 57–59, 85–88, and Gln-92; these read GLV and GFPR. The tract at residues 122–159 is LID; it reads GRRVHPASGRSYHVRFNPPKAEGVDDVTGEPLVQRDDD. Residues Arg-123 and 132–133 contribute to the ATP site; that span reads SY. AMP is bound by residues Arg-156 and Arg-167. Gly-203 is an ATP binding site.

The protein belongs to the adenylate kinase family. Monomer.

It is found in the cytoplasm. The enzyme catalyses AMP + ATP = 2 ADP. The protein operates within purine metabolism; AMP biosynthesis via salvage pathway; AMP from ADP: step 1/1. Catalyzes the reversible transfer of the terminal phosphate group between ATP and AMP. Plays an important role in cellular energy homeostasis and in adenine nucleotide metabolism. This is Adenylate kinase from Bordetella parapertussis (strain 12822 / ATCC BAA-587 / NCTC 13253).